The chain runs to 276 residues: Large ribosomal subunit protein uL2 (276 aa).

Residues 223–276 (VVMNPVDHPHGGGEGKSSGGRHPVSPWGKKTRGPKTRNNKVTDRLIIRRRNAKR) form a disordered region. The segment covering 251–260 (KKTRGPKTRN) has biased composition (basic residues).

It belongs to the universal ribosomal protein uL2 family. As to quaternary structure, part of the 50S ribosomal subunit. Forms a bridge to the 30S subunit in the 70S ribosome.

Functionally, one of the primary rRNA binding proteins. Required for association of the 30S and 50S subunits to form the 70S ribosome, for tRNA binding and peptide bond formation. It has been suggested to have peptidyltransferase activity; this is somewhat controversial. Makes several contacts with the 16S rRNA in the 70S ribosome. The chain is Large ribosomal subunit protein uL2 from Hyphomonas neptunium (strain ATCC 15444).